The chain runs to 327 residues: Beta-ketoacyl-[acyl-carrier-protein] synthase III 2 (327 aa).

Catalysis depends on residues Cys114 and His251. Residues 252–256 (SANLR) are ACP-binding. Asn281 is a catalytic residue.

Belongs to the thiolase-like superfamily. FabH family. Homodimer.

The protein localises to the cytoplasm. The enzyme catalyses malonyl-[ACP] + acetyl-CoA + H(+) = 3-oxobutanoyl-[ACP] + CO2 + CoA. The protein operates within lipid metabolism; fatty acid biosynthesis. Catalyzes the condensation reaction of fatty acid synthesis by the addition to an acyl acceptor of two carbons from malonyl-ACP. Catalyzes the first condensation reaction which initiates fatty acid synthesis and may therefore play a role in governing the total rate of fatty acid production. Possesses both acetoacetyl-ACP synthase and acetyl transacylase activities. Its substrate specificity determines the biosynthesis of branched-chain and/or straight-chain of fatty acids. The polypeptide is Beta-ketoacyl-[acyl-carrier-protein] synthase III 2 (Bacillus cereus (strain ATCC 14579 / DSM 31 / CCUG 7414 / JCM 2152 / NBRC 15305 / NCIMB 9373 / NCTC 2599 / NRRL B-3711)).